Consider the following 343-residue polypeptide: S-adenosylmethionine:tRNA ribosyltransferase-isomerase (343 aa).

Belongs to the QueA family. As to quaternary structure, monomer.

Its subcellular location is the cytoplasm. It catalyses the reaction 7-aminomethyl-7-carbaguanosine(34) in tRNA + S-adenosyl-L-methionine = epoxyqueuosine(34) in tRNA + adenine + L-methionine + 2 H(+). Its pathway is tRNA modification; tRNA-queuosine biosynthesis. Transfers and isomerizes the ribose moiety from AdoMet to the 7-aminomethyl group of 7-deazaguanine (preQ1-tRNA) to give epoxyqueuosine (oQ-tRNA). The sequence is that of S-adenosylmethionine:tRNA ribosyltransferase-isomerase from Enterococcus faecalis (strain ATCC 700802 / V583).